A 307-amino-acid chain; its full sequence is 4-hydroxybenzoate octaprenyltransferase (307 aa).

9 consecutive transmembrane segments (helical) span residues 19 to 39, 48 to 68, 105 to 125, 127 to 147, 150 to 170, 172 to 192, 221 to 241, 243 to 263, and 282 to 302; these read PVGIELLLWPTLWGVLFAAMG, VTAGLPSLSIFVVFALGAILM, AIAAFLVLVLLSASLLLFLPI, VFYWSFAAVILAFIYPFMKRY, LPQVFLAAAFGWAIPMAYVAI, GAADIWCWLLFLAYMCWTVAY, VIIISLLQILFLVIMGAVMWH, FVPTSLGITPVFGLALVAMMF, and FLANIWVGRYVFALIAIACVW.

Belongs to the UbiA prenyltransferase family. It depends on Mg(2+) as a cofactor.

The protein localises to the cell inner membrane. The catalysed reaction is all-trans-octaprenyl diphosphate + 4-hydroxybenzoate = 4-hydroxy-3-(all-trans-octaprenyl)benzoate + diphosphate. The protein operates within cofactor biosynthesis; ubiquinone biosynthesis. In terms of biological role, catalyzes the prenylation of para-hydroxybenzoate (PHB) with an all-trans polyprenyl group. Mediates the second step in the final reaction sequence of ubiquinone-8 (UQ-8) biosynthesis, which is the condensation of the polyisoprenoid side chain with PHB, generating the first membrane-bound Q intermediate 3-octaprenyl-4-hydroxybenzoate. This is 4-hydroxybenzoate octaprenyltransferase from Psychrobacter arcticus (strain DSM 17307 / VKM B-2377 / 273-4).